We begin with the raw amino-acid sequence, 682 residues long: MNMFFRLTALAGLLAIAGQTFAVEDITRADQIPVLKEETQHATVSERVTSRFTRSHYRQFDLDQAFSAKIFDRYLNLLDYSHNVLLASDVEQFAKKKTELGDELRSGKLDVFYDLYNLAQKRRFERYQYALSVLEKPMDFTGNDTYNLDRSKAPWPKNEAELNALWDSKVKFDELSLKLTGKTDKEIRETLTRRYKFAIRRLAQTNSEDVFSLAMTAFAREIDPHTNYLSPRNTEQFNTEMSLSLEGIGAVLQMDDDYTVINSMVAGGPAAKSKAISVGDKIVGVGQTGKPMVDVIGWRLDDVVALIKGPKGSKVRLEILPAGKGTKTRTVTLTRERIRLEDRAVKMSVKTVGKEKVGVLDIPGFYVGLTDDVKVQLQKLEKQNVSSVIIDLRSNGGGALTEAVSLSGLFIPAGPIVQVRDNNGKVREDSDTDGQVFYKGPLVVLVDRFSASASEIFAAAMQDYGRALVVGEPTFGKGTVQQYRSLNRIYDQMLRPEWPALGSVQYTIQKFYRVNGGSTQRKGVTPDIIMPTGNEETETGEKFEDNALPWDSIDAATYVKSGDLTAFEPELLKEHNARIAKDPEFQNIMKDIARFNAMKDKRNIVSLNYAVREKENNEDDATRLARLNERFKREGKPELKKLDDLPKDYQEPDPYLDETVNIALDLAKLEKARPAEQPAPVK.

The N-terminal stretch at 1-22 is a signal peptide; sequence MNMFFRLTALAGLLAIAGQTFA. Residues 238–322 form the PDZ domain; sequence NTEMSLSLEG…SKVRLEILPA (85 aa). Residues serine 452, aspartate 463, and lysine 477 each act as charge relay system in the active site. Basic and acidic residues predominate over residues 635–650; that stretch reads GKPELKKLDDLPKDYQ. The segment at 635 to 654 is disordered; the sequence is GKPELKKLDDLPKDYQEPDP.

It belongs to the peptidase S41A family.

It is found in the cell inner membrane. It carries out the reaction The enzyme shows specific recognition of a C-terminal tripeptide, Xaa-Yaa-Zaa, in which Xaa is preferably Ala or Leu, Yaa is preferably Ala or Tyr, and Zaa is preferably Ala, but then cleaves at a variable distance from the C-terminus. A typical cleavage is -Ala-Ala-|-Arg-Ala-Ala-Lys-Glu-Asn-Tyr-Ala-Leu-Ala-Ala.. Involved in the cleavage of a C-terminal peptide of 11 residues from the precursor form of penicillin-binding protein 3 (PBP3). May be involved in protection of the bacterium from thermal and osmotic stresses. The protein is Tail-specific protease (prc) of Escherichia coli (strain K12).